Consider the following 335-residue polypeptide: Phosphate acyltransferase (335 aa).

Belongs to the PlsX family. As to quaternary structure, homodimer. Probably interacts with PlsY.

The protein localises to the cytoplasm. The catalysed reaction is a fatty acyl-[ACP] + phosphate = an acyl phosphate + holo-[ACP]. It functions in the pathway lipid metabolism; phospholipid metabolism. In terms of biological role, catalyzes the reversible formation of acyl-phosphate (acyl-PO(4)) from acyl-[acyl-carrier-protein] (acyl-ACP). This enzyme utilizes acyl-ACP as fatty acyl donor, but not acyl-CoA. In Streptococcus equi subsp. equi (strain 4047), this protein is Phosphate acyltransferase.